The chain runs to 86 residues: Anti-adapter protein IraP (86 aa).

A coiled-coil region spans residues 1 to 36 (MKNLIAELLVKLAEKEEESKELVAQVEALEIVVTAL).

This sequence belongs to the IraP family. Interacts with RssB.

Its subcellular location is the cytoplasm. Its function is as follows. Inhibits RpoS proteolysis by regulating RssB activity, thereby increasing the stability of the sigma stress factor RpoS especially during phosphate starvation, but also in stationary phase and during nitrogen starvation. Its effect on RpoS stability is due to its interaction with RssB, which probably blocks the interaction of RssB with RpoS, and the consequent delivery of the RssB-RpoS complex to the ClpXP protein degradation pathway. In Cronobacter sakazakii (strain ATCC BAA-894) (Enterobacter sakazakii), this protein is Anti-adapter protein IraP.